We begin with the raw amino-acid sequence, 225 residues long: NAD(P)H-quinone oxidoreductase subunit K, chloroplastic (225 aa).

Residues C43, C44, C108, and C139 each contribute to the [4Fe-4S] cluster site.

This sequence belongs to the complex I 20 kDa subunit family. NDH is composed of at least 16 different subunits, 5 of which are encoded in the nucleus. The cofactor is [4Fe-4S] cluster.

The protein resides in the plastid. It localises to the chloroplast thylakoid membrane. It carries out the reaction a plastoquinone + NADH + (n+1) H(+)(in) = a plastoquinol + NAD(+) + n H(+)(out). It catalyses the reaction a plastoquinone + NADPH + (n+1) H(+)(in) = a plastoquinol + NADP(+) + n H(+)(out). In terms of biological role, NDH shuttles electrons from NAD(P)H:plastoquinone, via FMN and iron-sulfur (Fe-S) centers, to quinones in the photosynthetic chain and possibly in a chloroplast respiratory chain. The immediate electron acceptor for the enzyme in this species is believed to be plastoquinone. Couples the redox reaction to proton translocation, and thus conserves the redox energy in a proton gradient. In Eucalyptus globulus subsp. globulus (Tasmanian blue gum), this protein is NAD(P)H-quinone oxidoreductase subunit K, chloroplastic.